The sequence spans 396 residues: 8-amino-7-oxononanoate synthase (396 aa).

Substrate is bound at residue Arg21. 112 to 113 (GY) lines the pyridoxal 5'-phosphate pocket. Substrate is bound at residue His137. 3 residues coordinate pyridoxal 5'-phosphate: Ser183, His211, and Thr239. The residue at position 242 (Lys242) is an N6-(pyridoxal phosphate)lysine. Residue Thr358 coordinates substrate.

It belongs to the class-II pyridoxal-phosphate-dependent aminotransferase family. BioF subfamily. In terms of assembly, homodimer. It depends on pyridoxal 5'-phosphate as a cofactor.

The enzyme catalyses 6-carboxyhexanoyl-[ACP] + L-alanine + H(+) = (8S)-8-amino-7-oxononanoate + holo-[ACP] + CO2. The protein operates within cofactor biosynthesis; biotin biosynthesis. Its function is as follows. Catalyzes the decarboxylative condensation of pimeloyl-[acyl-carrier protein] and L-alanine to produce 8-amino-7-oxononanoate (AON), [acyl-carrier protein], and carbon dioxide. The polypeptide is 8-amino-7-oxononanoate synthase (Bordetella petrii (strain ATCC BAA-461 / DSM 12804 / CCUG 43448)).